The chain runs to 329 residues: 3-isopropylmalate dehydrogenase (329 aa).

Substrate is bound by residues R83, R93, R114, and D200. Mg(2+) is bound by residues D200, D224, and D228. 257 to 269 serves as a coordination point for NAD(+); sequence GSAPQIAGKNIAN.

The protein belongs to the isocitrate and isopropylmalate dehydrogenases family. As to quaternary structure, homotetramer. The cofactor is Mg(2+). Mn(2+) serves as cofactor.

The protein localises to the cytoplasm. The catalysed reaction is (2R,3S)-3-isopropylmalate + NAD(+) = 4-methyl-2-oxopentanoate + CO2 + NADH. It participates in amino-acid biosynthesis; L-leucine biosynthesis; L-leucine from 3-methyl-2-oxobutanoate: step 3/4. Its function is as follows. Catalyzes the oxidation of 3-carboxy-2-hydroxy-4-methylpentanoate (3-isopropylmalate) to 3-carboxy-4-methyl-2-oxopentanoate. The product decarboxylates to 4-methyl-2 oxopentanoate. The polypeptide is 3-isopropylmalate dehydrogenase (leuB) (Methanothermobacter thermautotrophicus (strain ATCC 29096 / DSM 1053 / JCM 10044 / NBRC 100330 / Delta H) (Methanobacterium thermoautotrophicum)).